A 322-amino-acid polypeptide reads, in one-letter code: tRNA-modifying protein YgfZ (322 aa).

Trp-182 serves as a coordination point for folate.

The protein belongs to the tRNA-modifying YgfZ family.

It localises to the cytoplasm. Functionally, folate-binding protein involved in regulating the level of ATP-DnaA and in the modification of some tRNAs. It is probably a key factor in regulatory networks that act via tRNA modification, such as initiation of chromosomal replication. In Vibrio parahaemolyticus serotype O3:K6 (strain RIMD 2210633), this protein is tRNA-modifying protein YgfZ.